A 748-amino-acid chain; its full sequence is Formate acetyltransferase (748 aa).

Residues 5–618 form the PFL domain; the sequence is NNHTNAWQGF…KTGNTPDGRK (614 aa). Catalysis depends on Cys412, which acts as the S-acetylcysteine intermediate. Cys413 serves as the catalytic Cysteine radical intermediate. In terms of domain architecture, Glycine radical spans 625–748; it reads PGANPMHGRD…VISRTFHESM (124 aa). Gly723 carries the glycine radical modification.

Belongs to the glycyl radical enzyme (GRE) family. PFL subfamily. Homodimer.

It localises to the cytoplasm. The enzyme catalyses formate + acetyl-CoA = pyruvate + CoA. It functions in the pathway fermentation; pyruvate fermentation; formate from pyruvate: step 1/1. In terms of biological role, catalyzes the conversion of pyruvate to formate and acetyl-CoA. The polypeptide is Formate acetyltransferase (pflB) (Staphylococcus epidermidis (strain ATCC 12228 / FDA PCI 1200)).